A 597-amino-acid polypeptide reads, in one-letter code: Aspartate--tRNA ligase (597 aa).

Glu180 contacts L-aspartate. The segment at 204–207 (QLFK) is aspartate. Arg226 is an L-aspartate binding site. Residues 226 to 228 (RDE) and Gln235 contribute to the ATP site. His454 contributes to the L-aspartate binding site. Glu488 is a binding site for ATP. Arg495 is a binding site for L-aspartate. Position 540-543 (540-543 (GLDR)) interacts with ATP.

It belongs to the class-II aminoacyl-tRNA synthetase family. Type 1 subfamily. In terms of assembly, homodimer.

Its subcellular location is the cytoplasm. It catalyses the reaction tRNA(Asp) + L-aspartate + ATP = L-aspartyl-tRNA(Asp) + AMP + diphosphate. Catalyzes the attachment of L-aspartate to tRNA(Asp) in a two-step reaction: L-aspartate is first activated by ATP to form Asp-AMP and then transferred to the acceptor end of tRNA(Asp). In Clostridium perfringens (strain SM101 / Type A), this protein is Aspartate--tRNA ligase.